The chain runs to 347 residues: Ceramide very long chain fatty acid hydroxylase scs7 (347 aa).

Topologically, residues 1–156 (MASVTSEKCV…GNFLEPLTKT (156 aa)) are cytoplasmic. A helical transmembrane segment spans residues 157–177 (PWYMIPLIWVPCVTYGFLYAC). Residue T178 is a topological domain, lumenal. A helical transmembrane segment spans residues 179-199 (GIPFSVAITFFIIGLFTWTLV). The Cytoplasmic portion of the chain corresponds to 200–238 (EYTMHRFLFHLDEYTPDHPIFLTMHFAFHGCHHFLPADK). Residues H204, H209, H228, H231, and H232 each coordinate Zn(2+). The helical transmembrane segment at 239–259 (YRLVMPPALFLIFATPWYHFI) threads the bilayer. A topological domain (lumenal) is located at residue Q260. The chain crosses the membrane as a helical span at residues 261–281 (LVLPHYIGVAGFSGAILGYVF). Over 282–347 (YDLTHYFLHH…EQGKISTKAK (66 aa)) the chain is Cytoplasmic. Zn(2+) is bound by residues H286, H290, H306, H309, and H310.

The protein belongs to the sterol desaturase family. SCS7 subfamily. Zn(2+) is required as a cofactor.

The protein resides in the endoplasmic reticulum membrane. Its pathway is sphingolipid metabolism. In terms of biological role, ceramide hydroxylase involved in the hydroxylation of sphingolipid-associated very long chain fatty acids. Postulated to hydroxylate the very long chain fatty acid of dihydroceramides and phytoceramides at C-2. In Schizosaccharomyces pombe (strain 972 / ATCC 24843) (Fission yeast), this protein is Ceramide very long chain fatty acid hydroxylase scs7.